The sequence spans 1411 residues: ACSSPEVSIFHFFVYAGSFVKNFKKMKGSSAISKREMSRADQCKLLAYTAVGYETVGNVAADIASIEGANLVAAPVAAGGHLGKGLTDAAMIAMDCSSIPFEEIKEILNKEFKEMGRKLDKNTEALEHVSKLVSKTLSTVEKIRVEMREGFKLVIETIENIATKEIVFDINKIVQYFNNERENINSRQKEEFVAKLQEPAPGNFLLYLRNSRTSESGTLYSLLFRIIDQELAIPNNAGDNNAIQALYALFYGTETFISIMFYLVKQYSYLAEYHYQKGNLEEFNTNFDHMKIVFQDFKFSLIGINQNTKPLVDEVLNVLNNVKNKSFIRNVQNKLFYDLMKQTESLLELKKEIANMELPIIDETPRLSISISFKERSDDKPVDTPLLKWDKGKEVKYAIQFEQDGKFSKISSWSKPVTVQHLACPFISVDKDRRNRLIFRQFGDQIPELVGTLRGSQVEFRDIHRDLYNAAQVPYAREALSISRTLIQNGANVSETFELGRGAIHAAASAGNYDVGELLLNKDINLLEKADKNGYTPLHIAADSNKNDFVMFLIGNNADVNVRTKSDLFTPLHLAARRDLTDVTQTLIDITEIDLNAQDKSGFTPLHLSISSTSETAAILIRNTNAVINIKSKVGLTPLHLATLQNNLSVSKLLAGKGAYLNDGDANGMTPLHYAAMTGNLEMVDFLLNQQYININAATKEKKWTPLHLAILFKKNDVAERLLSDENLNIRLETNGGINPLHLASATGNKQLVIELLAKNADVTRLTSKGFSALHLGIIGKNEEIPFFLVEKGANVNDKTNSGVTPLHFAAGLGKANIFRLLLSRGADIKAEDINSQMPIHEAVSNGHLEIVRILIEKDPSLMNVKNIRNEYPFYLAVEKRYKDIFDYFVSKDANVNEVDHNGNTLLHLFSSTGELEVVQFLMQNGANFRLKNNERKTFFDLAIENGRLNIVAFAVEKNKVNLQAAHRGKTILYHAICDSAKYDKIEIVKYFIEKLNESECNPLHEAAAYAHLDLVKYFVQERGINPAEFNEENQASPFCITIHGAPCGYSLDCDTPDRLEVVEYLSDKIPDINGKCDVQENTPITVAIFANKVSILNYLVGIGADPNQQVDGDPPLYIAARQGRFEIVRCLIEVHKVDINTRNKERFTALHAAARNDFMDVVKYLVRQGADVNAKGIDDLRPIDIAGEKAKAYLQSSRFLRSGHSFQSNEIDSFGNTIHGISMSARTNDKLTQQISSKGTRSDSNSTEGKMHSENVHVRSIDVNGALLLLDFMIRVFASKKTNFAPYGSRIKTRSAAEAQAEALIMTERFENLLSGLIGDPIPDSIDFSNVHSKIYKAIMSGRRSVISEMLCSFAEEYSKLNHESIKQLLSEFETLTTTKASEIHIEESVPYAPFEICELKVNSNVSQIK.

A propeptide spanning residues 1-35 (ACSSPEVSIFHFFVYAGSFVKNFKKMKGSSAISKR) is cleaved from the precursor. Residues 245 to 264 (ALYALFYGTETFISIMFYLV) are helix H8 is the probable transmembrane region of the tetrameric pore inserted in the target cell membrane. ANK repeat units follow at residues 462-495 (DIHR…NVSE), 499-528 (LGRG…NLLE), 533-562 (NGYT…DVNV), 567-597 (DLFT…DLNA), 601-630 (SGFT…VINI), 634-663 (VGLT…YLND), 667-697 (NGMT…NINA), 702-732 (KKWT…NIRL), 736-765 (GGIN…DVTR), 769-798 (KGFS…NVND), 802-831 (SGVT…DIKA), 835-864 (NSQM…SLMN), 869-898 (RNEY…NVNE), 902-931 (NGNT…NFRL), 935-965 (ERKT…NLQA), 968-999 (RGKT…LNES), 1000-1029 (ECNP…NPAE), 1080-1109 (QENT…DPNQ), 1112-1142 (DGDP…DINT), and 1146-1175 (ERFT…DVNA). A propeptide spanning residues 1196–1411 (QSSRFLRSGH…KVNSNVSQIK (216 aa)) is cleaved from the precursor. The segment covering 1230–1249 (DKLTQQISSKGTRSDSNSTE) has biased composition (polar residues). The tract at residues 1230 to 1254 (DKLTQQISSKGTRSDSNSTEGKMHS) is disordered. The ANK 21 repeat unit spans residues 1331 to 1361 (NVHSKIYKAIMSGRRSVISEMLCSFAEEYSK).

Belongs to the cationic peptide 01 (latrotoxin) family. 02 (alpha-latroinsectotoxin) subfamily. In terms of assembly, homotetramer in membranes. Expressed by the venom gland.

The protein localises to the secreted. It is found in the target cell membrane. In terms of biological role, insecticidal presynaptic neurotoxin that induces massive neurotransmitter release at insect (but not vertebrate) neuromuscular junctions. Native toxin forms cation-permeable pores (with high permeability to calcium) in lipid membranes locust muscle membrane and artificial lipid bilayers. May bind to insect neurexin-1 homolog, insect adhesion G protein-coupled receptor L1 homolog, and insect receptor-type tyrosine-protein phosphatase S homolog, and induces neurotransmitter exocytosis both by forming tetrameric pores in membranes and signaling via G protein-coupled receptor. Oligomerization is a process independent of divalent cations. The toxin forms channels with 0.55-0.58 nm entrance diameter and a relatively small conductance in planar phospholipid membranes. This Latrodectus tredecimguttatus (Mediterranean black widow spider) protein is Alpha-latroinsectotoxin-Lt1a.